Here is a 213-residue protein sequence, read N- to C-terminus: Carboxysome shell protein CcmP (213 aa).

2 BMC circularly permuted domains span residues 4–106 and 107–211; these read ELRS…RLKP and KIVS…GDRS. Residues 69–70 carry the Probably important for pore gating motif; sequence ER.

Belongs to the EutL/PduB family. A dimer of stacked trimers, the same faces interact.

It is found in the carboxysome. In terms of biological role, probably part of the carboxysome shell, a polyhedral inclusion where RuBisCO (ribulose bisphosphate carboxylase, rbcL-rbcS) is sequestered. It is thought that this protein controls transport of RuBisCO reactants in and out of the carboxysome; residual densities in the 4 X-ray structures suggest that differing compounds bind in interior pockets, depending on the open or closed state of the pore. This Synechococcus elongatus (strain ATCC 33912 / PCC 7942 / FACHB-805) (Anacystis nidulans R2) protein is Carboxysome shell protein CcmP.